Reading from the N-terminus, the 220-residue chain is uncharacterized protein (220 aa).

A coiled-coil region spans residues 165 to 202; that stretch reads DKYEDLISDYNKIMEKYREVIKSEIEKYKALSKRKNDI.

This is an uncharacterized protein from Pasteurella multocida (strain Pm70).